A 109-amino-acid polypeptide reads, in one-letter code: Class I hydrophobin SC1 (109 aa).

Residues 1-22 (MRFSLAILALPVLAAATAVPRG) form the signal peptide. 4 cysteine pairs are disulfide-bonded: cysteine 27–cysteine 88, cysteine 34–cysteine 82, cysteine 35–cysteine 69, and cysteine 89–cysteine 102.

The protein belongs to the fungal hydrophobin family. Self-assembles to form functional amyloid fibrils called rodlets. Self-assembly into fibrillar rodlets occurs spontaneously at hydrophobic:hydrophilic interfaces and the rodlets further associate laterally to form amphipathic monolayers.

It is found in the secreted. Its subcellular location is the cell wall. Aerial growth, conidiation, and dispersal of filamentous fungi in the environment rely upon a capability of their secreting small amphipathic proteins called hydrophobins (HPBs) with low sequence identity. Class I can self-assemble into an outermost layer of rodlet bundles on aerial cell surfaces, conferring cellular hydrophobicity that supports fungal growth, development and dispersal; whereas Class II form highly ordered films at water-air interfaces through intermolecular interactions but contribute nothing to the rodlet structure. SC1 is a dikaryon-specific class I hydrophobin that contributes to the formation of aerial hyphae and fruiting bodies. The polypeptide is Class I hydrophobin SC1 (Schizophyllum commune (Split gill fungus)).